The sequence spans 76 residues: Cyclin-dependent kinases regulatory subunit (76 aa).

This sequence belongs to the CKS family. As to quaternary structure, forms a homohexamer that can probably bind six kinase subunits.

Functionally, binds to the catalytic subunit of the cyclin dependent kinases and is essential for their biological function. The polypeptide is Cyclin-dependent kinases regulatory subunit (Patella vulgata (Common limpet)).